The chain runs to 142 residues: uncharacterized protein (142 aa).

This is an uncharacterized protein from Methanocaldococcus jannaschii (strain ATCC 43067 / DSM 2661 / JAL-1 / JCM 10045 / NBRC 100440) (Methanococcus jannaschii).